The sequence spans 70 residues: Brevinin-ALb (70 aa).

The signal sequence occupies residues 1 to 22; sequence MFTLKKSLLLLFFLGTINLSLC. Residues 23-46 constitute a propeptide that is removed on maturation; that stretch reads EQERDADEEERRDDDEMDVEVEKR. An intrachain disulfide couples C64 to C70.

Expressed by the skin glands.

It localises to the secreted. Its function is as follows. Antimicrobial peptide with activity against Gram-positive and Gram-negative bacteria and against fungi. Has been tested against S.aureus (MIC=5.5 ug/mL), E.coli (MIC=6.5 ug/mL), B.dysenteriae (MIC=2.2 ug/mL), and C.albicans (MIC=7.5 ug/mL). Can regulate or mediate antimicrobial response by stimulating mast cell degranulation. Induces histamine release. Shows cytotoxicity toward solid tumor cell line HepG2. Also shows a potent hemolytic activity (LD(50)=5 ug/ml). This chain is Brevinin-ALb, found in Amolops loloensis (Lolokou Sucker Frog).